The primary structure comprises 64 residues: Putative antitoxin VapB4 (64 aa).

The protein belongs to the UPF0165 family.

Its function is as follows. Possibly the antitoxin component of a type II toxin-antitoxin (TA) system. Its cognate toxin is VapC4 (Potential). The polypeptide is Putative antitoxin VapB4 (vapB4) (Archaeoglobus fulgidus (strain ATCC 49558 / DSM 4304 / JCM 9628 / NBRC 100126 / VC-16)).